Here is a 339-residue protein sequence, read N- to C-terminus: NADH-quinone oxidoreductase subunit H (339 aa).

Helical transmembrane passes span 10 to 30 (FPLT…ILCV), 50 to 70 (PNVV…KLLF), 82 to 102 (ILFI…WAVI), 115 to 135 (VGVL…IIAG), 161 to 181 (MGLV…SGII), 187 to 207 (LPWW…ISVL), 235 to 255 (MGFA…SAMT), 275 to 295 (IPGF…FLWI), and 311 to 331 (GWKV…SVLF).

It belongs to the complex I subunit 1 family. In terms of assembly, NDH-1 is composed of 14 different subunits. Subunits NuoA, H, J, K, L, M, N constitute the membrane sector of the complex.

Its subcellular location is the cell inner membrane. It carries out the reaction a quinone + NADH + 5 H(+)(in) = a quinol + NAD(+) + 4 H(+)(out). Its function is as follows. NDH-1 shuttles electrons from NADH, via FMN and iron-sulfur (Fe-S) centers, to quinones in the respiratory chain. The immediate electron acceptor for the enzyme in this species is believed to be ubiquinone. Couples the redox reaction to proton translocation (for every two electrons transferred, four hydrogen ions are translocated across the cytoplasmic membrane), and thus conserves the redox energy in a proton gradient. This subunit may bind ubiquinone. This Rickettsia prowazekii (strain Madrid E) protein is NADH-quinone oxidoreductase subunit H.